Consider the following 98-residue polypeptide: snRNA-activating protein complex subunit 5 (98 aa).

The disordered stretch occupies residues alanine 75–serine 98. The segment covering glutamate 86 to serine 98 has biased composition (acidic residues).

In terms of assembly, part of the SNAPc complex composed of 5 subunits: SNAPC1, SNAPC2, SNAPC3, SNAPC4 and SNAPC5. SNAPC5 interacts with SNAPC4.

It is found in the nucleus. Functionally, part of the SNAPc complex required for the transcription of both RNA polymerase II and III small-nuclear RNA genes. Binds to the proximal sequence element (PSE), a non-TATA-box basal promoter element common to these 2 types of genes. Recruits TBP and BRF2 to the U6 snRNA TATA box. This is snRNA-activating protein complex subunit 5 (SNAPC5) from Bos taurus (Bovine).